The chain runs to 440 residues: Serine/threonine-protein kinase VRK1 (440 aa).

Positions 37–317 (WKLGLPIGQG…LLEYTEKPLY (281 aa)) constitute a Protein kinase domain. Residues 43 to 51 (IGQGGFGCI) and lysine 71 contribute to the ATP site. A Glycyl lysine isopeptide (Lys-Gly) (interchain with G-Cter in SUMO2) cross-link involves residue lysine 71. Aspartate 177 acts as the Proton acceptor in catalysis. Serine 342 is modified (phosphoserine; by PLK3). At serine 376 the chain carries Phosphoserine. At threonine 378 the chain carries Phosphothreonine. Polar residues-rich tracts occupy residues 379-391 (QVQE…SVES) and 398-410 (SMSQ…SSSD). Residues 379 to 440 (QVQEAAQTRS…GSRTRKKAQK (62 aa)) form a disordered region. The segment at 387–393 (RSVESQG) is required for interaction with the nucleosome.

The protein belongs to the protein kinase superfamily. CK1 Ser/Thr protein kinase family. VRK subfamily. As to quaternary structure, interacts with HDAC1, KAT2B, SETDB1, KDM3A and KDM4A. Associates with the nucleosome through interactions with nucleosome DNA, histone H2A and histone H2B; the interaction with H2A and H2B is mediated by the nucleosome acidic patch, a cluster of negatively charged residues of H2A and H2B forming a cleft within the nucleosome core. Post-translationally, autophosphorylated at various serine and threonine residues. Autophosphorylation does not impair its ability to phosphorylate p53/TP53. Phosphorylation by PLK3 leads to induction of Golgi fragmentation during mitosis. As to expression, highly expressed in testis. Expressed in liver, kidney and muscle. Weakly expressed in thymus, bone marrow and spleen.

The protein localises to the nucleus. It is found in the cytoplasm. Its subcellular location is the cajal body. It carries out the reaction L-seryl-[protein] + ATP = O-phospho-L-seryl-[protein] + ADP + H(+). The enzyme catalyses L-threonyl-[protein] + ATP = O-phospho-L-threonyl-[protein] + ADP + H(+). Its activity is regulated as follows. Active in presence of Mn(2+), Mg(2+) and Zn(2+), but is not functional with Ca(2+) or Cu(2+). Has a higher affinity for Mn(2+) than for Mg(2+). RAN inhibits its autophosphorylation and its ability to phosphorylate histone H3. In terms of biological role, serine/threonine kinase involved in the regulation of key cellular processes including the cell cycle, nuclear condensation, transcription regulation, and DNA damage response. Controls chromatin organization and remodeling by mediating phosphorylation of histone H3 on 'Thr-4' and histone H2AX (H2aXT4ph). It also phosphorylates KAT5 in response to DNA damage, promoting KAT5 association with chromatin and histone acetyltransferase activity. Is involved in the regulation of cell cycle progression of neural progenitors, and is required for proper cortical neuronal migration. Is involved in neurite elongation and branching in motor neurons, and has an essential role in Cajal bodies assembly, acting through COIL phosphorylation and the control of coilin degradation. Involved in Golgi disassembly during the cell cycle: following phosphorylation by PLK3 during mitosis, required to induce Golgi fragmentation. Phosphorylates BANF1: disrupts its ability to bind DNA, reduces its binding to LEM domain-containing proteins and causes its relocalization from the nucleus to the cytoplasm. Phosphorylates TP53BP1 and p53/TP53 on 'Thr-18', preventing the interaction between p53/TP53 and MDM2. Phosphorylates ATF2 which activates its transcriptional activity. Phosphorylates JUN. This chain is Serine/threonine-protein kinase VRK1, found in Mus musculus (Mouse).